A 198-amino-acid chain; its full sequence is uncharacterized protein (198 aa).

Residues 40 to 111 (GSALPPQAPT…LSRGAGQGAP (72 aa)) form a disordered region. Positions 60-74 (SSRTPGPRPPRSTLR) are enriched in low complexity.

This is an uncharacterized protein from Homo sapiens (Human).